The sequence spans 200 residues: Large ribosomal subunit protein uL4 (200 aa).

The disordered stretch occupies residues 43–71 (RAQKTRAEVSGSGKKPWRQKGTGRARSGD).

Belongs to the universal ribosomal protein uL4 family. In terms of assembly, part of the 50S ribosomal subunit.

Its function is as follows. One of the primary rRNA binding proteins, this protein initially binds near the 5'-end of the 23S rRNA. It is important during the early stages of 50S assembly. It makes multiple contacts with different domains of the 23S rRNA in the assembled 50S subunit and ribosome. Functionally, forms part of the polypeptide exit tunnel. This chain is Large ribosomal subunit protein uL4, found in Pasteurella multocida (strain Pm70).